A 149-amino-acid chain; its full sequence is Probable cyclic pyranopterin monophosphate synthase (149 aa).

Residues 67-69 (LCH) and 103-104 (ME) each bind substrate. Asp118 is a catalytic residue.

Belongs to the MoaC family. As to quaternary structure, homohexamer; trimer of dimers.

The enzyme catalyses (8S)-3',8-cyclo-7,8-dihydroguanosine 5'-triphosphate = cyclic pyranopterin phosphate + diphosphate. It participates in cofactor biosynthesis; molybdopterin biosynthesis. Functionally, catalyzes the conversion of (8S)-3',8-cyclo-7,8-dihydroguanosine 5'-triphosphate to cyclic pyranopterin monophosphate (cPMP). In Saccharolobus solfataricus (strain ATCC 35092 / DSM 1617 / JCM 11322 / P2) (Sulfolobus solfataricus), this protein is Probable cyclic pyranopterin monophosphate synthase.